The following is a 502-amino-acid chain: 4,4'-diaponeurosporene oxygenase (502 aa).

Ile-8 to Ile-20 is an FAD binding site.

Belongs to the carotenoid/retinoid oxidoreductase family. CrtP subfamily. Requires FAD as cofactor.

It carries out the reaction all-trans-4,4'-diaponeurosporene + 2 AH2 + 2 O2 = 4,4'-diaponeurosporenal + 2 A + 3 H2O. The protein operates within carotenoid biosynthesis; staphyloxanthin biosynthesis; staphyloxanthin from farnesyl diphosphate: step 3/5. Involved in the biosynthesis of the yellow-orange carotenoid staphyloxanthin, which plays a role in the virulence via its protective function against oxidative stress. Catalyzes the oxidation of the terminal methyl side group of 4,4'-diaponeurosporene to form 4,4'-diaponeurosporen-4-al. The protein is 4,4'-diaponeurosporene oxygenase of Staphylococcus haemolyticus (strain JCSC1435).